The following is a 419-amino-acid chain: UDP-N-acetylglucosamine 1-carboxyvinyltransferase (419 aa).

22–23 (KN) lines the phosphoenolpyruvate pocket. UDP-N-acetyl-alpha-D-glucosamine is bound at residue Arg91. Residue Cys115 is the Proton donor of the active site. Cys115 is modified (2-(S-cysteinyl)pyruvic acid O-phosphothioketal). UDP-N-acetyl-alpha-D-glucosamine-binding positions include 120–124 (RPVDL), 160–163 (KVSV), Asp305, and Val327.

This sequence belongs to the EPSP synthase family. MurA subfamily.

The protein localises to the cytoplasm. It catalyses the reaction phosphoenolpyruvate + UDP-N-acetyl-alpha-D-glucosamine = UDP-N-acetyl-3-O-(1-carboxyvinyl)-alpha-D-glucosamine + phosphate. It functions in the pathway cell wall biogenesis; peptidoglycan biosynthesis. Its function is as follows. Cell wall formation. Adds enolpyruvyl to UDP-N-acetylglucosamine. The sequence is that of UDP-N-acetylglucosamine 1-carboxyvinyltransferase from Shigella dysenteriae serotype 1 (strain Sd197).